The chain runs to 333 residues: Glycerol-3-phosphate dehydrogenase [NAD(P)+] (333 aa).

NADPH-binding residues include Ser10, Phe11, Arg31, and Lys105. Sn-glycerol 3-phosphate contacts are provided by Lys105, Gly136, and Ser138. Residue Ala140 coordinates NADPH. Sn-glycerol 3-phosphate-binding residues include Lys191, Asp244, Ser254, Arg255, and Asn256. Lys191 functions as the Proton acceptor in the catalytic mechanism. Arg255 lines the NADPH pocket. The NADPH site is built by Val279 and Glu281.

The protein belongs to the NAD-dependent glycerol-3-phosphate dehydrogenase family.

The protein resides in the cytoplasm. The catalysed reaction is sn-glycerol 3-phosphate + NAD(+) = dihydroxyacetone phosphate + NADH + H(+). It catalyses the reaction sn-glycerol 3-phosphate + NADP(+) = dihydroxyacetone phosphate + NADPH + H(+). It participates in membrane lipid metabolism; glycerophospholipid metabolism. Functionally, catalyzes the reduction of the glycolytic intermediate dihydroxyacetone phosphate (DHAP) to sn-glycerol 3-phosphate (G3P), the key precursor for phospholipid synthesis. This is Glycerol-3-phosphate dehydrogenase [NAD(P)+] from Leptospira biflexa serovar Patoc (strain Patoc 1 / Ames).